Reading from the N-terminus, the 128-residue chain is Lutropin subunit beta (128 aa).

The signal sequence occupies residues 1 to 20 (MERLQGLLLWLLLSPSVVWA). Disulfide bonds link Cys-29–Cys-77, Cys-43–Cys-92, Cys-54–Cys-108, Cys-58–Cys-110, and Cys-113–Cys-120. Residue Asn-33 is glycosylated (N-linked (GlcNAc...) asparagine).

Belongs to the glycoprotein hormones subunit beta family. Heterodimer of a common alpha chain and a unique beta chain which confers biological specificity to thyrotropin, lutropin, follitropin and gonadotropin.

The protein resides in the secreted. Its function is as follows. Promotes spermatogenesis and ovulation by stimulating the testes and ovaries to synthesize steroids. The protein is Lutropin subunit beta (LHB) of Phodopus sungorus (Striped hairy-footed hamster).